We begin with the raw amino-acid sequence, 376 residues long: Succinyl-diaminopimelate desuccinylase (376 aa).

H67 contributes to the Zn(2+) binding site. The active site involves D69. Zn(2+) is bound at residue D100. Residue E134 is the Proton acceptor of the active site. Zn(2+) contacts are provided by E135, E163, and H349.

It belongs to the peptidase M20A family. DapE subfamily. Homodimer. The cofactor is Zn(2+). Requires Co(2+) as cofactor.

It catalyses the reaction N-succinyl-(2S,6S)-2,6-diaminopimelate + H2O = (2S,6S)-2,6-diaminopimelate + succinate. Its pathway is amino-acid biosynthesis; L-lysine biosynthesis via DAP pathway; LL-2,6-diaminopimelate from (S)-tetrahydrodipicolinate (succinylase route): step 3/3. Catalyzes the hydrolysis of N-succinyl-L,L-diaminopimelic acid (SDAP), forming succinate and LL-2,6-diaminopimelate (DAP), an intermediate involved in the bacterial biosynthesis of lysine and meso-diaminopimelic acid, an essential component of bacterial cell walls. This chain is Succinyl-diaminopimelate desuccinylase, found in Pseudoalteromonas atlantica (strain T6c / ATCC BAA-1087).